Consider the following 296-residue polypeptide: Lipoyl synthase (296 aa).

The [4Fe-4S] cluster site is built by cysteine 37, cysteine 42, cysteine 48, cysteine 63, cysteine 67, cysteine 70, and serine 276. The 217-residue stretch at 49 to 265 (WSKKHTTVMI…ERVAKTKGFL (217 aa)) folds into the Radical SAM core domain.

This sequence belongs to the radical SAM superfamily. Lipoyl synthase family. Requires [4Fe-4S] cluster as cofactor.

It localises to the cytoplasm. The enzyme catalyses [[Fe-S] cluster scaffold protein carrying a second [4Fe-4S](2+) cluster] + N(6)-octanoyl-L-lysyl-[protein] + 2 oxidized [2Fe-2S]-[ferredoxin] + 2 S-adenosyl-L-methionine + 4 H(+) = [[Fe-S] cluster scaffold protein] + N(6)-[(R)-dihydrolipoyl]-L-lysyl-[protein] + 4 Fe(3+) + 2 hydrogen sulfide + 2 5'-deoxyadenosine + 2 L-methionine + 2 reduced [2Fe-2S]-[ferredoxin]. It participates in protein modification; protein lipoylation via endogenous pathway; protein N(6)-(lipoyl)lysine from octanoyl-[acyl-carrier-protein]: step 2/2. In terms of biological role, catalyzes the radical-mediated insertion of two sulfur atoms into the C-6 and C-8 positions of the octanoyl moiety bound to the lipoyl domains of lipoate-dependent enzymes, thereby converting the octanoylated domains into lipoylated derivatives. The sequence is that of Lipoyl synthase from Rickettsia peacockii (strain Rustic).